Reading from the N-terminus, the 460-residue chain is Putative RNA-guided DNA endonuclease MT2953 (460 aa).

Residues Asp-224 and Glu-313 contribute to the active site. Zn(2+)-binding residues include Cys-372, Cys-375, Cys-389, and Cys-392. Residue Asp-399 is part of the active site. Residues Val-415 to Lys-460 form a disordered region.

It in the N-terminal section; belongs to the transposase 2 family. The protein in the C-terminal section; belongs to the transposase 35 family.

Its function is as follows. An RNA-guided dsDNA endonuclease. When guided by an RNA derived from the right-end element of its insertion sequence element (IS), cleaves DNA downstream of the transposon-associated motif (TAM). Cleaves supercoiled and linear DNA in a staggered manner 15-21 bases from the TAM yielding 5'-overhangs. Binds reRNA, an approximately 150 nucleotide base sRNA derived from the 3' end of its own gene, the right end (RE) of the insertion sequence (IS) plus sequence downstream of the IS. The chain is Putative RNA-guided DNA endonuclease MT2953 from Mycobacterium tuberculosis (strain CDC 1551 / Oshkosh).